Here is a 288-residue protein sequence, read N- to C-terminus: Pyridoxal kinase PdxY (288 aa).

Substrate-binding positions include Ser-9 and 44 to 45; that span reads TQ. Positions 111, 148, and 181 each coordinate ATP. Asp-224 serves as a coordination point for substrate.

Belongs to the pyridoxine kinase family. PdxY subfamily. In terms of assembly, homodimer. It depends on Mg(2+) as a cofactor.

The catalysed reaction is pyridoxal + ATP = pyridoxal 5'-phosphate + ADP + H(+). The protein operates within cofactor metabolism; pyridoxal 5'-phosphate salvage; pyridoxal 5'-phosphate from pyridoxal: step 1/1. In terms of biological role, pyridoxal kinase involved in the salvage pathway of pyridoxal 5'-phosphate (PLP). Catalyzes the phosphorylation of pyridoxal to PLP. The chain is Pyridoxal kinase PdxY from Haemophilus influenzae (strain ATCC 51907 / DSM 11121 / KW20 / Rd).